A 364-amino-acid polypeptide reads, in one-letter code: Geissoschizine synthase (364 aa).

An Enoyl reductase (ER) domain is found at Gly-24–Ile-343. Cys-51 is a Zn(2+) binding site. Residue Asn-52 coordinates NADP(+). Zn(2+) is bound by residues His-73, Glu-74, Cys-104, Cys-107, Cys-110, Cys-118, and Cys-168. 13 residues coordinate NADP(+): Leu-194, Gly-196, Leu-197, Ser-216, Thr-217, Ser-218, Lys-221, Arg-261, Val-280, Ala-282, Ser-304, Thr-306, and Arg-351.

It belongs to the zinc-containing alcohol dehydrogenase family. Class-III subfamily. In terms of assembly, homodimer. Requires Zn(2+) as cofactor.

The catalysed reaction is (19E)-geissoschizine + NADP(+) = 4,21-dehydrogeissoschizine + NADPH. It carries out the reaction (19E)-geissoschizine + NADPH + H(+) = (16R,19E)-isositsirikine + NADP(+). The enzyme catalyses (19E)-geissoschizine + NADPH + H(+) = (16R,19Z)-isositsirikine + NADP(+). It functions in the pathway alkaloid biosynthesis. An alcohol dehydrogenase involved in the biosynthesis of seco-iridoid and derivatives monoterpenoid indole alkaloids natural products. Catalyzes the production of geissoschizine and its conversion to (16R)-E-isositsirikine and (16R)-Z-isositsirikine. The polypeptide is Geissoschizine synthase (Alstonia scholaris (Dogbane)).